We begin with the raw amino-acid sequence, 223 residues long: 2-C-methyl-D-erythritol 4-phosphate cytidylyltransferase (223 aa).

The protein belongs to the IspD/TarI cytidylyltransferase family. IspD subfamily.

It catalyses the reaction 2-C-methyl-D-erythritol 4-phosphate + CTP + H(+) = 4-CDP-2-C-methyl-D-erythritol + diphosphate. Its pathway is isoprenoid biosynthesis; isopentenyl diphosphate biosynthesis via DXP pathway; isopentenyl diphosphate from 1-deoxy-D-xylulose 5-phosphate: step 2/6. In terms of biological role, catalyzes the formation of 4-diphosphocytidyl-2-C-methyl-D-erythritol from CTP and 2-C-methyl-D-erythritol 4-phosphate (MEP). The protein is 2-C-methyl-D-erythritol 4-phosphate cytidylyltransferase of Prochlorococcus marinus subsp. pastoris (strain CCMP1986 / NIES-2087 / MED4).